The primary structure comprises 1462 residues: MGAQDRPQCHFDIEINREPVGRIMFQLFSDICPKTCKNFLCLCSGEKGLGKTTGKKLCYKGSTFHRVVKNFMIQGGDFSEGNGKGGESIYGGYFKDENFILKHDRAFLLSMANRGKHTNGSQFFITTKPAPHLDGVHVVFGLVISGFEVIEQIENLKTDAASRPYADVRVIDCGVLATKSIKDVFEKKRKKPTHSEGSDSSSNSSSSSESSSESELEHERSRRRKHKRRPKVKRSKKRRKEASSSEEPRNKHAMNPKGHSERSDTNEKRSVDSSAKREKPVVRPEEIPPVPENRFLLRRDMPVVTAEPEPKIPDVAPIVSDQKPSVSKSGRKIKGRGTIRYHTPPRSRSCSESDDDDSSETPPHWKEEMQRLRAYRPPSGEKWSKGDKLSDPCSSRWDERSLSQRSRSWSYNGYYSDLSTARHSGHHKKRRKEKKVKHKKKGKKQKHCRRHKQTKKRRILIPSDIESSKSSTRRMKSSCDRERSSRSSSLSSHHSSKRDWSKSDKDVQSSLTHSSRDSYRSKSHSQSYSRGSSRSRTASKSSSHSRSRSKSRSSSKSGHRKRASKSPRKTASQLSENKPVKTEPLRATMAQNENVVVQPVVAENIPVIPLSDSPPPSRWKPGQKPWKPSYERIQEMKAKTTHLLPIQSTYSLANIKETGSSSSYHKREKNSESDQSTYSKYSDRSSESSPRSRSRSSRSRSYSRSYTRSRSLASSHSRSRSPSSRSHSRNKYSDHSQCSRSSSYTSISSDDGRRAKRRLRSSGKKNSVSHKKHSSSSEKTLHSKYVKGRDRSSCVRKYSESRSSLDYSSDSEQSSVQATQSAQEKEKQGQMERTHNKQEKNRGEEKSKSERECPHSKKRTLKENLSDHLRNGSKPKRKNYAGSKWDSESNSERDVTKNSKNDSHPSSDKEEGEATSDSESEVSEIHIKVKPTTKSSTNTSLPDDNGAWKSSKQRTSTSDSEGSCSNSENNRGKPQKHKHGSKENLKREHTKKVKEKLKGKKDKKHKAPKRKQAFHWQPPLEFGEEEEEEIDDKQVTQESKEKKVSENNETIKDNILKTEKSSEEDLSGKHDTVTVSSDLDQFTKDDSKLSISPTALNTEENVACLQNIQHVEESVPNGVEDVLQTDDNMEICTPDRSSPAKVEETSPLGNARLDTPDINIVLKQDMATEHPQAEVVKQESSMSESKVLGEVGKQDSSSASLASAGESTGKKEVAEKSQINLIDKKWKPLQGVGNLAAPNAATSSAVEVKVLTTVPEMKPQGLRIEIKSKNKVRPGSLFDEVRKTARLNRRPRNQESSSDEQTPSRDDDSQSRSPSRSRSKSETKSRHRTRSVSYSHSRSRSRSSTSSYRSRSYSRSRSRGWYSRGRTRSRSSSYRSYKSHRTSSRSRSRSSSYDPHSRSRSYTYDSYYSRSRSRSRSQRSDSYHRGRSYNRRSRSCRSYGSDSESDRSYSHHRSPSESSRYS.

Residues 10–175 (HFDIEINREP…ADVRVIDCGV (166 aa)) enclose the PPIase cyclophilin-type domain. Disordered stretches follow at residues 187-591 (KKRK…TMAQ) and 607-627 (VIPLSDSPPPSRWKPGQKPWK). Low complexity predominate over residues 198–213 (SDSSSNSSSSSESSSE). Basic residues predominate over residues 221 to 240 (SRRRKHKRRPKVKRSKKRRK). Basic and acidic residues-rich tracts occupy residues 241–250 (EASSSEEPRN) and 258–286 (GHSERSDTNEKRSVDSSAKREKPVVRPEE). K323 participates in a covalent cross-link: Glycyl lysine isopeptide (Lys-Gly) (interchain with G-Cter in SUMO2). Residues 329–345 (SGRKIKGRGTIRYHTPP) are compositionally biased toward basic residues. Phosphoserine is present on residues S379, S401, and S416. A compositionally biased stretch (basic and acidic residues) spans 382–402 (KWSKGDKLSDPCSSRWDERSL). Residues 403-421 (SQRSRSWSYNGYYSDLSTA) show a composition bias toward polar residues. The segment covering 423-459 (HSGHHKKRRKEKKVKHKKKGKKQKHCRRHKQTKKRRI) has biased composition (basic residues). 2 positions are modified to phosphoserine: S463 and S471. Residues 497–507 (KRDWSKSDKDV) are compositionally biased toward basic and acidic residues. Residues 524–542 (HSQSYSRGSSRSRTASKSS) are compositionally biased toward low complexity. Positions 543-568 (SHSRSRSKSRSSSKSGHRKRASKSPR) are enriched in basic residues. Residues K578 and K581 each participate in a glycyl lysine isopeptide (Lys-Gly) (interchain with G-Cter in SUMO2) cross-link. S613 carries the post-translational modification Phosphoserine. A Glycyl lysine isopeptide (Lys-Gly) (interchain with G-Cter in SUMO2) cross-link involves residue K639. At S648 the chain carries Phosphoserine. Glycyl lysine isopeptide (Lys-Gly) (interchain with G-Cter in SUMO2) cross-links involve residues K656 and K666. The interval 658–1072 (TGSSSSYHKR…EEDLSGKHDT (415 aa)) is disordered. Composition is skewed to low complexity over residues 699-725 (SRSYSRSYTRSRSLASSHSRSRSPSSR) and 736-749 (SQCSRSSSYTSISS). Positions 754 to 774 (RAKRRLRSSGKKNSVSHKKHS) are enriched in basic residues. Over residues 775-800 (SSSEKTLHSKYVKGRDRSSCVRKYSE) the composition is skewed to basic and acidic residues. The segment covering 801–815 (SRSSLDYSSDSEQSS) has biased composition (low complexity). Composition is skewed to basic and acidic residues over residues 823–870 (QEKE…DHLR) and 885–909 (WDSESNSERDVTKNSKNDSHPSSDK). Residues S866, S887, S889, S891, and S907 each carry the phosphoserine modification. Residues 910 to 922 (EEGEATSDSESEV) are compositionally biased toward acidic residues. Residues 932 to 969 (TTKSSTNTSLPDDNGAWKSSKQRTSTSDSEGSCSNSEN) are compositionally biased toward polar residues. A compositionally biased stretch (basic residues) spans 988 to 1013 (EHTKKVKEKLKGKKDKKHKAPKRKQA). Acidic residues predominate over residues 1022 to 1031 (FGEEEEEEID). Residues 1032 to 1072 (DKQVTQESKEKKVSENNETIKDNILKTEKSSEEDLSGKHDT) show a composition bias toward basic and acidic residues. K1057 participates in a covalent cross-link: Glycyl lysine isopeptide (Lys-Gly) (interchain with G-Cter in SUMO2). Residues S1077 and S1146 each carry the phosphoserine modification. The segment at 1129 to 1156 (MEICTPDRSSPAKVEETSPLGNARLDTP) is disordered. Position 1155 is a phosphothreonine (T1155). A Glycyl lysine isopeptide (Lys-Gly) (interchain with G-Cter in SUMO2) cross-link involves residue K1163. The segment at 1169 to 1215 (EHPQAEVVKQESSMSESKVLGEVGKQDSSSASLASAGESTGKKEVAE) is disordered. K1177 participates in a covalent cross-link: Glycyl lysine isopeptide (Lys-Gly) (interchain with G-Cter in SUMO1); alternate. Residue K1177 forms a Glycyl lysine isopeptide (Lys-Gly) (interchain with G-Cter in SUMO2); alternate linkage. S1203 bears the Phosphoserine mark. Residues K1216, K1225, and K1258 each participate in a glycyl lysine isopeptide (Lys-Gly) (interchain with G-Cter in SUMO2) cross-link. The tract at residues 1251–1462 (LTTVPEMKPQ…RSPSESSRYS (212 aa)) is disordered. The segment at 1311–1348 (SRSPSRSRSKSETKSRHRTRSVSYSHSRSRSRSSTSSY) is arg/Ser tandem repeat-rich. Low complexity-rich tracts occupy residues 1331–1351 (SVSYSHSRSRSRSSTSSYRSR) and 1359–1376 (RGWYSRGRTRSRSSSYRS). Basic residues predominate over residues 1377–1388 (YKSHRTSSRSRS). Residues 1389-1410 (RSSSYDPHSRSRSYTYDSYYSR) are compositionally biased toward low complexity. The span at 1425 to 1435 (RGRSYNRRSRS) shows a compositional bias: basic residues.

The protein resides in the cell membrane. The enzyme catalyses [protein]-peptidylproline (omega=180) = [protein]-peptidylproline (omega=0). Its activity is regulated as follows. Inhibited by cyclosporin A (CsA). Its function is as follows. PPIase that catalyzes the cis-trans isomerization of proline imidic peptide bonds in oligopeptides and may therefore assist protein folding. Component of a putative tumor-recognition complex involved in the function of NK cells. This is NK-tumor recognition protein from Homo sapiens (Human).